Reading from the N-terminus, the 141-residue chain is Hemoglobin subunit alpha-1/2 (141 aa).

The region spanning 1 to 141 (VLSAABKSBV…VSTVLTSKYR (141 aa)) is the Globin domain. Position 3 is a phosphoserine (serine 3). 2 positions are modified to N6-succinyllysine: lysine 7 and lysine 11. Lysine 16 carries the N6-acetyllysine; alternate modification. An N6-succinyllysine; alternate modification is found at lysine 16. Residue tyrosine 24 is modified to Phosphotyrosine. Phosphoserine is present on serine 35. N6-succinyllysine is present on lysine 40. At serine 49 the chain carries Phosphoserine. Histidine 58 lines the O2 pocket. Histidine 87 contributes to the heme b binding site. At serine 102 the chain carries Phosphoserine. A Phosphothreonine modification is found at threonine 108. Residue serine 124 is modified to Phosphoserine. Phosphothreonine is present on residues threonine 134 and threonine 137. Phosphoserine is present on serine 138.

This sequence belongs to the globin family. In terms of assembly, heterotetramer of two alpha chains and two beta chains. As to expression, red blood cells.

Functionally, involved in oxygen transport from the lung to the various peripheral tissues. This Odocoileus virginianus virginianus (Virginia white-tailed deer) protein is Hemoglobin subunit alpha-1/2.